The chain runs to 207 residues: High frequency lysogenization protein HflD homolog (207 aa).

It belongs to the HflD family.

The protein resides in the cytoplasm. Its subcellular location is the cell inner membrane. This Pseudomonas fluorescens (strain SBW25) protein is High frequency lysogenization protein HflD homolog.